The following is a 394-amino-acid chain: 4-hydroxyphenylpyruvate dioxygenase (394 aa).

VOC domains are found at residues 18–149 (SFHH…LLEY) and 181–339 (FIDH…IFTK). Residues His-184, His-267, and Glu-350 each contribute to the Fe cation site.

It belongs to the 4HPPD family. As to quaternary structure, homodimer. Requires Fe cation as cofactor.

It is found in the cytoplasm. The protein localises to the endoplasmic reticulum membrane. The protein resides in the golgi apparatus membrane. It catalyses the reaction 3-(4-hydroxyphenyl)pyruvate + O2 = homogentisate + CO2. It functions in the pathway amino-acid degradation; L-phenylalanine degradation; acetoacetate and fumarate from L-phenylalanine: step 3/6. Catalyzes the conversion of 4-hydroxyphenylpyruvic acid to homogentisic acid, one of the steps in tyrosine catabolism. This chain is 4-hydroxyphenylpyruvate dioxygenase (hpd), found in Xenopus tropicalis (Western clawed frog).